The primary structure comprises 469 residues: Neuraminidase (469 aa).

Topologically, residues 1-6 (MNPNQK) are intravirion. Residues 7–27 (IITIGSICMVVGIISLILQIG) form a helical membrane-spanning segment. An involved in apical transport and lipid raft association region spans residues 11–33 (GSICMVVGIISLILQIGNIISIW). Residues 28 to 469 (NIISIWISHS…GAELPFTIDK (442 aa)) are Virion surface-facing. Positions 36–90 (HSIQTGSQNHTGICNQSIITYKNSTWVNQTYVNISNTNVVAGKGTTPVILAGNSS) are hypervariable stalk region. Asn-44, Asn-50, Asn-58, Asn-63, Asn-68, and Asn-88 each carry an N-linked (GlcNAc...) asparagine; by host glycan. A head of neuraminidase region spans residues 91–469 (LCPIRGWAIY…GAELPFTIDK (379 aa)). Intrachain disulfides connect Cys-92-Cys-417, Cys-124-Cys-129, Cys-184-Cys-231, Cys-233-Cys-238, Cys-279-Cys-292, Cys-281-Cys-290, Cys-318-Cys-335, and Cys-421-Cys-446. Position 118 (Arg-118) interacts with substrate. A glycan (N-linked (GlcNAc...) asparagine; by host) is linked at Asn-146. Asp-151 serves as the catalytic Proton donor/acceptor. Arg-152 contributes to the substrate binding site. Asn-235 carries N-linked (GlcNAc...) asparagine; by host glycosylation. 277 to 278 (EE) is a binding site for substrate. Arg-293 is a binding site for substrate. 4 residues coordinate Ca(2+): Asp-294, Gly-298, Asp-324, and Asn-344. Residue Asn-365 is glycosylated (N-linked (GlcNAc...) asparagine; by host). Arg-368 lines the substrate pocket. Tyr-402 serves as the catalytic Nucleophile.

It belongs to the glycosyl hydrolase 34 family. In terms of assembly, homotetramer. Ca(2+) is required as a cofactor. N-glycosylated.

It localises to the virion membrane. The protein resides in the host apical cell membrane. It catalyses the reaction Hydrolysis of alpha-(2-&gt;3)-, alpha-(2-&gt;6)-, alpha-(2-&gt;8)- glycosidic linkages of terminal sialic acid residues in oligosaccharides, glycoproteins, glycolipids, colominic acid and synthetic substrates.. Inhibited by the neuraminidase inhibitors zanamivir (Relenza) and oseltamivir (Tamiflu). These drugs interfere with the release of progeny virus from infected cells and are effective against all influenza strains. Resistance to neuraminidase inhibitors is quite rare. Functionally, catalyzes the removal of terminal sialic acid residues from viral and cellular glycoconjugates. Cleaves off the terminal sialic acids on the glycosylated HA during virus budding to facilitate virus release. Additionally helps virus spread through the circulation by further removing sialic acids from the cell surface. These cleavages prevent self-aggregation and ensure the efficient spread of the progeny virus from cell to cell. Otherwise, infection would be limited to one round of replication. Described as a receptor-destroying enzyme because it cleaves a terminal sialic acid from the cellular receptors. May facilitate viral invasion of the upper airways by cleaving the sialic acid moieties on the mucin of the airway epithelial cells. Likely to plays a role in the budding process through its association with lipid rafts during intracellular transport. May additionally display a raft-association independent effect on budding. Plays a role in the determination of host range restriction on replication and virulence. Sialidase activity in late endosome/lysosome traffic seems to enhance virus replication. The polypeptide is Neuraminidase (Influenza A virus (strain A/USA:Huston/AA/1945 H1N1)).